Consider the following 297-residue polypeptide: Undecaprenyl-diphosphatase (297 aa).

The next 7 membrane-spanning stretches (helical) occupy residues 58–78 (PGVA…LSYF), 103–123 (AQMG…GLLI), 138–158 (LAAI…AEQL), 168–188 (LRLA…IPGV), 208–228 (AARF…LVEL), 243–263 (VLAI…AWLL), and 274–294 (FVVY…TGTL).

The protein belongs to the UppP family.

The protein resides in the cell inner membrane. It carries out the reaction di-trans,octa-cis-undecaprenyl diphosphate + H2O = di-trans,octa-cis-undecaprenyl phosphate + phosphate + H(+). Functionally, catalyzes the dephosphorylation of undecaprenyl diphosphate (UPP). Confers resistance to bacitracin. The sequence is that of Undecaprenyl-diphosphatase from Synechococcus sp. (strain ATCC 27144 / PCC 6301 / SAUG 1402/1) (Anacystis nidulans).